A 259-amino-acid polypeptide reads, in one-letter code: (3R)-3-hydroxyacyl-CoA dehydrogenase (259 aa).

NAD(+) is bound by residues 13–21 and 40–41; these read LVTGAGSGI and DL. Ser-58 bears the Phosphoserine mark. Residue Lys-66 is modified to N6-acetyllysine. Residue 72 to 74 coordinates NAD(+); it reads ADV. Residue Ser-154 coordinates substrate. At Lys-158 the chain carries N6-succinyllysine. The active-site Proton acceptor is the Tyr-167. NAD(+)-binding positions include 167–171 and 200–202; these read YASSK and IAT. Lys-171 carries the N6-succinyllysine modification.

The protein belongs to the short-chain dehydrogenases/reductases (SDR) family. In terms of assembly, heterotetramer with CBR4; contains two molecules of HSD17B8 and CBR4. Expressed in ovary at protein level.

The protein resides in the mitochondrion matrix. It catalyses the reaction a (3R)-3-hydroxyacyl-CoA + NAD(+) = a 3-oxoacyl-CoA + NADH + H(+). It carries out the reaction 17beta-estradiol + NAD(+) = estrone + NADH + H(+). The enzyme catalyses testosterone + NAD(+) = androst-4-ene-3,17-dione + NADH + H(+). The catalysed reaction is 17beta-hydroxy-5alpha-androstan-3-one + NAD(+) = 5alpha-androstan-3,17-dione + NADH + H(+). The protein operates within steroid biosynthesis; estrogen biosynthesis. Its pathway is lipid metabolism; fatty acid biosynthesis. It functions in the pathway lipid metabolism; mitochondrial fatty acid beta-oxidation. Its function is as follows. Required for the solubility and assembly of the heterotetramer 3-ketoacyl-[acyl carrier protein] (ACP) reductase functional complex (KAR or KAR1) that forms part of the mitochondrial fatty acid synthase (mtFAS). Alpha-subunit of the KAR complex that acts as scaffold protein required for the stability of carbonyl reductase type-4 (CBR4, beta-subunit of the KAR complex) and for its 3-ketoacyl-ACP reductase activity, thereby participating in mitochondrial fatty acid biosynthesis. Catalyzes the NAD-dependent conversion of (3R)-3-hydroxyacyl-CoA into 3-ketoacyl-CoA (3-oxoacyl-CoA) with no chain length preference; this enzymatic activity is not needed for the KAR function. Prefers (3R)-3-hydroxyacyl-CoA over (3S)-3-hydroxyacyl-CoA and displays enzymatic activity only in the presence of NAD(+). Cooperates with enoyl-CoA hydratase 1 in mitochondria, together they constitute an alternative route to the auxiliary enzyme pathways for the breakdown of Z-PUFA (cis polyunsaturated fatty acid) enoyl-esters. NAD-dependent 17-beta-hydroxysteroid dehydrogenase with highest activity towards estradiol (17beta-estradiol or E2). Has very low activity towards testosterone and dihydrotestosterone (17beta-hydroxy-5alpha-androstan-3-one). Primarily an oxidative enzyme, it can switch to a reductive mode determined in the appropriate physiologic milieu and catalyze the reduction of estrone (E1) to form biologically active 17beta-estradiol. This is (3R)-3-hydroxyacyl-CoA dehydrogenase (Hsd17b8) from Rattus norvegicus (Rat).